Here is a 767-residue protein sequence, read N- to C-terminus: Photosystem I P700 chlorophyll a apoprotein A1 (767 aa).

A run of 8 helical transmembrane segments spans residues 72–95 (IFSAHFGHLAVIFIWLSGAFFHGA), 158–181 (LMSLAIGALVMAGLMLNAGVFHYH), 197–221 (LNHHLAGLLGLGSLSWTGHLLHVSL), 305–323 (IAHHHLAIAVLFIVAGHMY), 364–387 (WHAQLGVNLAMLGSLSIIVAQHMY), 403–429 (IGLFTHHMWIGGFLIVGAAAHAAIAMI), 451–473 (AIISHLNWVCIWLGAHSFGLYVH), and 548–566 (FMVHHIHAFTIHVTVLILL). Residues Cys590 and Cys599 each coordinate [4Fe-4S] cluster. 2 helical membrane passes run 606–627 (HVFLGLFWMYNSLSVVIFHFSW) and 681–703 (TSAYGLMFLGAHFVWAFSLMFLF). His692 is a binding site for chlorophyll a'. Chlorophyll a contacts are provided by Met700 and Tyr708. Trp709 contributes to the phylloquinone binding site. Residues 741–761 (AVGVAHYLLGGIATTWAFFHA) traverse the membrane as a helical segment.

Belongs to the PsaA/PsaB family. In terms of assembly, the PsaA/B heterodimer binds the P700 chlorophyll special pair and subsequent electron acceptors. PSI consists of a core antenna complex that captures photons, and an electron transfer chain that converts photonic excitation into a charge separation. The cyanobacterial PSI reaction center is composed of one copy each of PsaA,B,C,D,E,F,I,J,K,L,M and X, and forms trimeric complexes. Requires PSI electron transfer chain: 5 chlorophyll a, 1 chlorophyll a', 2 phylloquinones and 3 4Fe-4S clusters. PSI core antenna: 90 chlorophyll a, 22 carotenoids, 3 phospholipids and 1 galactolipid. P700 is a chlorophyll a/chlorophyll a' dimer, A0 is one or more chlorophyll a, A1 is one or both phylloquinones and FX is a shared 4Fe-4S iron-sulfur center. as cofactor.

Its subcellular location is the cellular thylakoid membrane. It catalyses the reaction reduced [plastocyanin] + hnu + oxidized [2Fe-2S]-[ferredoxin] = oxidized [plastocyanin] + reduced [2Fe-2S]-[ferredoxin]. Its function is as follows. PsaA and PsaB bind P700, the primary electron donor of photosystem I (PSI), as well as the electron acceptors A0, A1 and FX. PSI is a plastocyanin/cytochrome c6-ferredoxin oxidoreductase, converting photonic excitation into a charge separation, which transfers an electron from the donor P700 chlorophyll pair to the spectroscopically characterized acceptors A0, A1, FX, FA and FB in turn. Oxidized P700 is reduced on the lumenal side of the thylakoid membrane by plastocyanin or cytochrome c6. This Synechococcus sp. (strain CC9311) protein is Photosystem I P700 chlorophyll a apoprotein A1.